The following is a 256-amino-acid chain: Gramicidin S biosynthesis protein GrsT (256 aa).

Ser95 is a catalytic residue.

This sequence belongs to the thioesterase family.

It functions in the pathway antibiotic biosynthesis; gramicidin S biosynthesis. Functionally, probable thioesterase involved in the biosynthesis of gramicidin S. The chain is Gramicidin S biosynthesis protein GrsT (grsT) from Aneurinibacillus migulanus (Bacillus migulanus).